An 86-amino-acid polypeptide reads, in one-letter code: Sugar transporter SemiSWEET (86 aa).

Transmembrane regions (helical) follow at residues 3 to 23 (PFLI…AYAP), 37 to 57 (ISLG…IYGL), and 61 to 81 (DAPL…ILVM). Residues 6–63 (IKLIGFAAATCTTVAYAPQFIKVLKTRSARDISLGMFLVMVLGLALWLIYGLLSGDAP) form the PQ-loop domain.

As to quaternary structure, homodimer. Homooligomer.

It is found in the cell membrane. Its function is as follows. Mediates sucrose transmembrane transport down a concentration gradient. In Bradyrhizobium diazoefficiens (strain JCM 10833 / BCRC 13528 / IAM 13628 / NBRC 14792 / USDA 110), this protein is Sugar transporter SemiSWEET.